The chain runs to 444 residues: Baeyer-Villiger oxidase ptaJ (444 aa).

It belongs to the questin oxidase family. NADPH serves as cofactor.

It functions in the pathway secondary metabolite biosynthesis. Functionally, baeyer-Villiger oxidase; part of the gene cluster that mediates the biosynthesis of pestheic acid, a diphenyl ether which is a biosynthetic precursor of the unique chloropupukeananes. The biosynthesis initiates from condensation of acetate and malonate units catalyzed by the non-reducing PKS ptaA. As the ptaA protein is TE/CLC domain-deficient, hydrolysis and Claisen cyclization of the polyketide could be catalyzed by ptaB containing a beta-lactamase domain. The ptaB protein might hydrolyze the thioester bond between the ACP of ptaA and the intermediate to release atrochrysone carboxylic acid, which is spontaneously dehydrated to form endocrocin anthrone. Endocrocin anthrone is then converted to endocrocin, catalyzed by the anthrone oxygenase ptaC. Spontaneous decarboxylation of endocrocin occurs to generate emodin. An O-methyltransferase (ptaH or ptaI) could methylate emodin to form physcion. PtaJ could then catalyze the oxidative cleavage of physcion, and rotation of the intermediate could then afford desmethylisosulochrin. PtaF, a putative NADH-dependent oxidoreductase, might also participate in the oxidative cleavage step. Desmethylisosulochrin is then transformed by another O-methyltransferase (ptaH or ptaI) to form isosulochrin. Chlorination of isosulochrin by ptaM in the cyclohexadienone B ring then produces chloroisosulochrin. PtaE is responsible for the oxidative coupling reactions of both benzophenones isosulouchrin and chloroisosulouchrin to RES-1214-1 and pestheic acid respectively, regardless of chlorination. In Pestalotiopsis fici (strain W106-1 / CGMCC3.15140), this protein is Baeyer-Villiger oxidase ptaJ.